The primary structure comprises 189 residues: Interferon alpha-17 (189 aa).

The signal sequence occupies residues 1 to 23 (MALSFSLLMAVLVLSYKSICSLG). 2 disulfides stabilise this stretch: Cys-24–Cys-122 and Cys-52–Cys-162.

It belongs to the alpha/beta interferon family.

The protein localises to the secreted. Produced by macrophages, IFN-alpha have antiviral activities. Interferon stimulates the production of two enzymes: a protein kinase and an oligoadenylate synthetase. The polypeptide is Interferon alpha-17 (IFNA17) (Homo sapiens (Human)).